Here is a 312-residue protein sequence, read N- to C-terminus: Lipid-translocating exporter-like protein RTA1 (312 aa).

Residues 1-21 are disordered; that stretch reads MSPESKKITAHGSTSMPLSRT. Over residues 11 to 21 the composition is skewed to polar residues; the sequence is HGSTSMPLSRT. A run of 6 helical transmembrane segments spans residues 29–49, 61–81, 103–123, 142–162, 183–203, and 223–243; these read IPLT…FFLA, LSTM…YFIC, FITF…LLAG, AMIT…SFHV, FMMV…RSAY, and SLML…ILPI. Asparagine 258 and asparagine 304 each carry an N-linked (GlcNAc...) asparagine glycan.

Belongs to the lipid-translocating exporter (LTE) (TC 9.A.26.1) family.

The protein localises to the membrane. It functions in the pathway siderophore biosynthesis. Its function is as follows. Lipid-translocating exporter-like protein; part of the gene cluster that mediates the biosynthesis of hydroxamate-containing siderophores that play a critical role in virulence via intracellular iron acquisition during macrophage infection. This Ajellomyces capsulatus (Darling's disease fungus) protein is Lipid-translocating exporter-like protein RTA1.